The following is a 1025-amino-acid chain: Multidrug resistance protein MdtC (1025 aa).

The next 12 membrane-spanning stretches (helical) occupy residues 15–35, 333–353, 360–380, 387–407, 431–451, 469–489, 528–548, 851–871, 875–895, 897–917, 953–973, and 984–1004; these read ILISLAITLCGILGFRLLPVA, EVEQTLVISVALVILVVFLFL, LIPAVAVPVSLIGTFAAMYLC, LSLMALTIATGFVVDDAIVVL, VGFTVLSMSLSLVAVFLPLLL, VAIGISLAVSLTLTPMMCGWL, LTGLVVLGTIALSVWLYISIP, AQVILILAAIATVYIVLGVLY, VHPLTILSTLPSAGVGALLAL, IFDAPFSLIALIGIMLLIGIV, PIMMTTLAALFGALPLVLSGG, and ITIVGGLVMSQLLTLYTTPVV.

This sequence belongs to the resistance-nodulation-cell division (RND) (TC 2.A.6) family. MdtC subfamily. As to quaternary structure, part of a tripartite efflux system composed of MdtA, MdtB and MdtC. MdtC forms a heteromultimer with MdtB.

It is found in the cell inner membrane. This chain is Multidrug resistance protein MdtC, found in Klebsiella pneumoniae subsp. pneumoniae (strain ATCC 700721 / MGH 78578).